The sequence spans 856 residues: Leucine--tRNA ligase (856 aa).

The 'HIGH' region motif lies at 42–52 (PYPSGNLHMGH). The short motif at 617–621 (KMSKS) is the 'KMSKS' region element. Lys620 serves as a coordination point for ATP.

It belongs to the class-I aminoacyl-tRNA synthetase family.

It localises to the cytoplasm. The enzyme catalyses tRNA(Leu) + L-leucine + ATP = L-leucyl-tRNA(Leu) + AMP + diphosphate. The polypeptide is Leucine--tRNA ligase (Rippkaea orientalis (strain PCC 8801 / RF-1) (Cyanothece sp. (strain PCC 8801))).